We begin with the raw amino-acid sequence, 145 residues long: D-aminoacyl-tRNA deacylase (145 aa).

Residues 137–138 (GP) carry the Gly-cisPro motif, important for rejection of L-amino acids motif.

It belongs to the DTD family. In terms of assembly, homodimer.

The protein localises to the cytoplasm. The enzyme catalyses glycyl-tRNA(Ala) + H2O = tRNA(Ala) + glycine + H(+). The catalysed reaction is a D-aminoacyl-tRNA + H2O = a tRNA + a D-alpha-amino acid + H(+). An aminoacyl-tRNA editing enzyme that deacylates mischarged D-aminoacyl-tRNAs. Also deacylates mischarged glycyl-tRNA(Ala), protecting cells against glycine mischarging by AlaRS. Acts via tRNA-based rather than protein-based catalysis; rejects L-amino acids rather than detecting D-amino acids in the active site. By recycling D-aminoacyl-tRNA to D-amino acids and free tRNA molecules, this enzyme counteracts the toxicity associated with the formation of D-aminoacyl-tRNA entities in vivo and helps enforce protein L-homochirality. The polypeptide is D-aminoacyl-tRNA deacylase (Pseudomonas paraeruginosa (strain DSM 24068 / PA7) (Pseudomonas aeruginosa (strain PA7))).